The sequence spans 132 residues: Large ribosomal subunit protein bL19 (132 aa).

The protein belongs to the bacterial ribosomal protein bL19 family.

Functionally, this protein is located at the 30S-50S ribosomal subunit interface and may play a role in the structure and function of the aminoacyl-tRNA binding site. The polypeptide is Large ribosomal subunit protein bL19 (Rhodospirillum centenum (strain ATCC 51521 / SW)).